An 87-amino-acid polypeptide reads, in one-letter code: Small ribosomal subunit protein bS20 (87 aa).

Residues 1-29 (MANTAQARKRARQAVKQNAHNSSQRSTLR) form a disordered region. The segment covering 20–29 (HNSSQRSTLR) has biased composition (polar residues).

Belongs to the bacterial ribosomal protein bS20 family.

Binds directly to 16S ribosomal RNA. The protein is Small ribosomal subunit protein bS20 of Herminiimonas arsenicoxydans.